An 821-amino-acid polypeptide reads, in one-letter code: Leucine--tRNA ligase (821 aa).

The short motif at 44–54 (PYPSGRIHMGH) is the 'HIGH' region element. A 'KMSKS' region motif is present at residues 589-593 (KMSKS). Lysine 592 is a binding site for ATP.

This sequence belongs to the class-I aminoacyl-tRNA synthetase family.

It localises to the cytoplasm. The catalysed reaction is tRNA(Leu) + L-leucine + ATP = L-leucyl-tRNA(Leu) + AMP + diphosphate. The polypeptide is Leucine--tRNA ligase (Campylobacter curvus (strain 525.92)).